An 880-amino-acid chain; its full sequence is Valine--tRNA ligase (880 aa).

Residues 49 to 59 (PNVTGKLHLGH) carry the 'HIGH' region motif. The short motif at 525–529 (KMSKS) is the 'KMSKS' region element. Lysine 528 is a binding site for ATP. Residues 809–880 (LEGLINIDEE…VEKRIAELKN (72 aa)) adopt a coiled-coil conformation.

Belongs to the class-I aminoacyl-tRNA synthetase family. ValS type 1 subfamily. As to quaternary structure, monomer.

It localises to the cytoplasm. The enzyme catalyses tRNA(Val) + L-valine + ATP = L-valyl-tRNA(Val) + AMP + diphosphate. Functionally, catalyzes the attachment of valine to tRNA(Val). As ValRS can inadvertently accommodate and process structurally similar amino acids such as threonine, to avoid such errors, it has a 'posttransfer' editing activity that hydrolyzes mischarged Thr-tRNA(Val) in a tRNA-dependent manner. The polypeptide is Valine--tRNA ligase (Bacillus licheniformis (strain ATCC 14580 / DSM 13 / JCM 2505 / CCUG 7422 / NBRC 12200 / NCIMB 9375 / NCTC 10341 / NRRL NRS-1264 / Gibson 46)).